The sequence spans 152 residues: Xanthine-guanine phosphoribosyltransferase (152 aa).

5-phospho-alpha-D-ribose 1-diphosphate-binding positions include R37 to G38, R69, and D88 to T96. R69 is a GMP binding site. D89 is a binding site for Mg(2+). Residues D92 and I135 each contribute to the guanine site. The xanthine site is built by D92 and I135. GMP contacts are provided by residues D92–T96 and W134–I135.

This sequence belongs to the purine/pyrimidine phosphoribosyltransferase family. XGPT subfamily. In terms of assembly, homotetramer. Mg(2+) serves as cofactor.

The protein resides in the cell inner membrane. It catalyses the reaction GMP + diphosphate = guanine + 5-phospho-alpha-D-ribose 1-diphosphate. It carries out the reaction XMP + diphosphate = xanthine + 5-phospho-alpha-D-ribose 1-diphosphate. The catalysed reaction is IMP + diphosphate = hypoxanthine + 5-phospho-alpha-D-ribose 1-diphosphate. It functions in the pathway purine metabolism; GMP biosynthesis via salvage pathway; GMP from guanine: step 1/1. The protein operates within purine metabolism; XMP biosynthesis via salvage pathway; XMP from xanthine: step 1/1. In terms of biological role, purine salvage pathway enzyme that catalyzes the transfer of the ribosyl-5-phosphate group from 5-phospho-alpha-D-ribose 1-diphosphate (PRPP) to the N9 position of the 6-oxopurines guanine and xanthine to form the corresponding ribonucleotides GMP (guanosine 5'-monophosphate) and XMP (xanthosine 5'-monophosphate), with the release of PPi. To a lesser extent, also acts on hypoxanthine. This is Xanthine-guanine phosphoribosyltransferase from Aliivibrio salmonicida (strain LFI1238) (Vibrio salmonicida (strain LFI1238)).